The primary structure comprises 319 residues: Protein quaking-B (319 aa).

A KH domain is found at 87 to 153; that stretch reads YVPVKEYPDF…WEHLNEDLHV (67 aa). Positions 276–279 match the SH3-binding motif; that stretch reads PQTP.

The protein belongs to the quaking family. In terms of assembly, homodimer; does not require RNA to homodimerize.

It is found in the cytoplasm. The protein localises to the nucleus. Its function is as follows. RNA reader protein, which recognizes and binds specific RNAs, thereby regulating RNA metabolic processes, such as pre-mRNA splicing, circular RNA (circRNA) formation, mRNA export, mRNA stability and/or translation. Involved in various cellular processes, such as mRNA storage into stress granules, apoptosis, interferon response, glial cell fate and development. Binds to the 5'-NACUAAY-N(1,20)-UAAY-3' RNA core sequence. Acts as a mRNA modification reader that specifically recognizes and binds mRNA transcripts modified by internal N(7)-methylguanine (m7G). Promotes the formation of circular RNAs (circRNAs): acts by binding to sites flanking circRNA-forming exons. CircRNAs are produced by back-splicing circularization of pre-mRNAs. Required to protect and promote stability of mRNAs which promotes oligodendrocyte differentiation. Acts as an important regulator of muscle development: required during early skeletal myofibril formation by regulating the accumulation of the muscle-specific tropomyosin-3 (tpm3) transcripts. The polypeptide is Protein quaking-B (qki2) (Danio rerio (Zebrafish)).